Consider the following 371-residue polypeptide: Jasmonate-induced oxygenase 2 (371 aa).

The Fe2OG dioxygenase domain maps to 219 to 320 (NIGACLRVNY…RVSLAFFYNP (102 aa)). Position 225 (R225) interacts with jasmonate. Residues N227 and Y229 each coordinate 2-oxoglutarate. The Fe cation site is built by H244, D246, and H301. 2-oxoglutarate-binding residues include R311 and S313. Jasmonate is bound by residues R350 and R354.

This sequence belongs to the iron/ascorbate-dependent oxidoreductase family. L-ascorbate serves as cofactor. The cofactor is Fe(2+).

It catalyses the reaction jasmonate + 2-oxoglutarate + O2 = (1R,2R)-12-hydroxyjasmonate + succinate + CO2. Its function is as follows. 2-oxoglutarate-dependent dioxygenase involved in the oxidation of jasmonate (JA), a stress-induced phytohormone synthesized in response to attack by pathogens and herbivores, which triggers the activation of defense responses via the JA-mediated signaling pathway. Converts JA to 12-hydroxyjasmonate (12OH-JA), an inactive form of JA. Is specific to free JA, and cannot oxidize the bioactive form jasmonoyl-L-isoleucine (JA-Ile) or other JA-amino acid conjugates. Prevents over-accumulation of JA and indirectly its bioactive form JA-Ile under stress response. Acts as a negative regulator of JA-mediated defense signaling, by contributing to 12OH-JA accumulation, which represses JA defense responses upon infection by the fungal pathogen Botrytis cinerea. Acts as a negative regulator of JA-mediated defense responses upon infestation by the herbivorous caterpillar Mamestra brassicae. May be involved in the catabolism of cytotoxic polycyclic aromatic hydrocarbons (PAHs). This chain is Jasmonate-induced oxygenase 2, found in Arabidopsis thaliana (Mouse-ear cress).